Consider the following 95-residue polypeptide: MPRSLKKGPFVDGHLFEKIYKAKETGDRKVIKTWSRRSTIVPEFVGITVAVHNGKKFIPVFITENMVGHKLGEFAPTRTFYGHAGDKKSKVKGKK.

Belongs to the universal ribosomal protein uS19 family.

In terms of biological role, protein S19 forms a complex with S13 that binds strongly to the 16S ribosomal RNA. The sequence is that of Small ribosomal subunit protein uS19 from Syntrophobacter fumaroxidans (strain DSM 10017 / MPOB).